Here is a 217-residue protein sequence, read N- to C-terminus: Large ribosomal subunit protein uL1 (217 aa).

It belongs to the universal ribosomal protein uL1 family. In terms of assembly, part of the 50S ribosomal subunit.

Its function is as follows. Binds directly to 23S rRNA. Probably involved in E site tRNA release. Protein L1 is also a translational repressor protein, it controls the translation of its operon by binding to its mRNA. In Aeropyrum pernix (strain ATCC 700893 / DSM 11879 / JCM 9820 / NBRC 100138 / K1), this protein is Large ribosomal subunit protein uL1.